The primary structure comprises 1080 residues: Adenylate cyclase type 7 (1080 aa).

At 1-33 the chain is on the cytoplasmic side; it reads MPAKGRYFLNEGEEGPDQDALYEKYQLTSQHGP. A run of 6 helical transmembrane segments spans residues 34-54, 63-83, 95-117, 122-142, 147-167, and 176-196; these read LLLT…IIAF, QAIL…SVLM, ALAL…DAWT, AWEQ…LLPF, AVAV…SLMG, and VGLQ…TGAF. Topologically, residues 197–594 are cytoplasmic; sequence HKHQMQDASR…YRLAPIPRAR (398 aa). A Guanylate cyclase 1 domain is found at 279-406; it reads SILYADIVGF…HDVSLANRME (128 aa). Residues aspartate 284, isoleucine 285, and aspartate 328 each contribute to the Mg(2+) site. ATP contacts are provided by residues 284 to 289, 326 to 328, and arginine 372; these read DIVGFT and LGD. Residues 454–474 are disordered; the sequence is DPRSQQPPPPSQHLPRPKGDA. Residues 477-482 are mediates regulation of adenylate cyclase activity by C5 alpha-induced G- beta and gamma pathway; sequence KMRASV. The tract at residues 491 to 499 is mediates regulation of adenylate cyclase activity by sphingosine 1-phosphate-induced G alpha 13 pathway; that stretch reads WGAARPFAH. The segment at 504-546 is disordered; the sequence is ESVSSGETHVPNGRRPKSVPQRHRRTPDRSMSPKGRSEDDSYD. The interval 506–584 is modulates adenylate cyclase activity by modulating the binding of G(s)alpha to the high-affinity G(s)alpha binding site in 7C1a/7C2; sequence VSSGETHVPN…IFLEKGFERE (79 aa). The segment covering 515 to 529 has biased composition (basic residues); the sequence is NGRRPKSVPQRHRRT. Helical transmembrane passes span 595–615, 620–640, and 669–688; these read HDFA…VLLM, ALGV…GLCF, and LTLA…INLP. The N-linked (GlcNAc...) asparagine glycan is linked to asparagine 701. The next 2 helical transmembrane spans lie at 718 to 737 and 746 to 773; these read PLPY…SVFL and VLLT…CGQG. Residues asparagine 776 and asparagine 781 are each glycosylated (N-linked (GlcNAc...) asparagine). The chain crosses the membrane as a helical span at residues 794–814; that stretch reads DLKTMTNFYLVLFYITLLTLS. The Cytoplasmic segment spans residues 815–1080; the sequence is RQIDYYCRLD…TAKFQGLGLN (266 aa). One can recognise a Guanylate cyclase 2 domain in the interval 879-1023; sequence CVMFASVPDF…NTVNVASRME (145 aa). ATP is bound by residues lysine 931, 1010–1012, 1017–1021, and lysine 1057; these read DIW and NVASR.

It belongs to the adenylyl cyclase class-4/guanylyl cyclase family. It depends on Mg(2+) as a cofactor. Mn(2+) serves as cofactor. Phosphorylated by PRKCD.

The protein localises to the membrane. The enzyme catalyses ATP = 3',5'-cyclic AMP + diphosphate. Its activity is regulated as follows. Activated by the G protein alpha subunit. Activated by the G protein beta and gamma subunit complex. Activated by GNA13 and GNA12. Ethanol and phorbol 12,13-dibutanoate significantly potentiate adenylate cyclase activity generated in response to the activation of the prostanoid receptor by the agonist prostaglandin E1(1-) in a PKC-dependent manner. Inhibited by lithium. Its function is as follows. Catalyzes the formation of cAMP in response to activation of G protein-coupled receptors. Functions in signaling cascades activated namely by thrombin and sphingosine 1-phosphate and mediates regulation of cAMP synthesis through synergistic action of the stimulatory G alpha protein with GNA13. Also, during inflammation, mediates zymosan-induced increase intracellular cAMP, leading to protein kinase A pathway activation in order to modulate innate immune responses through heterotrimeric G proteins G(12/13). Functions in signaling cascades activated namely by dopamine and C5 alpha chain and mediates regulation of cAMP synthesis through synergistic action of the stimulatory G protein with G beta:gamma complex. Functions, through cAMP response regulation, to keep inflammation under control during bacterial infection by sensing the presence of serum factors, such as the bioactive lysophospholipid (LPA) that regulate LPS-induced TNF-alpha production. However, it is also required for the optimal functions of B and T cells during adaptive immune responses by regulating cAMP synthesis in both B and T cells. The sequence is that of Adenylate cyclase type 7 from Homo sapiens (Human).